A 901-amino-acid polypeptide reads, in one-letter code: HTH-type transcriptional regulator MalT (901 aa).

An ATP-binding site is contributed by 39–46; that stretch reads SPAGYGKT. An HTH luxR-type domain is found at 829-894; it reads ELIRTSPLTQ…DAVQHAQQLL (66 aa). Positions 853-872 form a DNA-binding region, H-T-H motif; the sequence is NEQIAGELAVAATTIKTHIR.

The protein belongs to the MalT family. Monomer in solution. Oligomerizes to an active state in the presence of the positive effectors ATP and maltotriose.

Activated by ATP and maltotriose, which are both required for DNA binding. Positively regulates the transcription of the maltose regulon whose gene products are responsible for uptake and catabolism of malto-oligosaccharides. Specifically binds to the promoter region of its target genes, recognizing a short DNA motif called the MalT box. The sequence is that of HTH-type transcriptional regulator MalT from Salmonella heidelberg (strain SL476).